Consider the following 186-residue polypeptide: Zinc finger AN1 domain-containing stress-associated protein 12 (186 aa).

2 consecutive AN1-type zinc fingers follow at residues 10 to 58 (PDLG…HGSR) and 97 to 147 (KKKK…INTA). Positions 16, 21, 31, 34, 39, 42, 48, 50, 103, 108, 120, 123, 128, 131, 137, and 139 each coordinate Zn(2+). A disordered region spans residues 167–186 (KGCGRGSSVSSKSSPSVRSF). The span at 172-186 (GSSVSSKSSPSVRSF) shows a compositional bias: low complexity.

Functionally, may be involved in environmental stress response. The sequence is that of Zinc finger AN1 domain-containing stress-associated protein 12 (SAP12) from Arabidopsis thaliana (Mouse-ear cress).